We begin with the raw amino-acid sequence, 302 residues long: Ornithine carbamoyltransferase (302 aa).

Carbamoyl phosphate-binding positions include 47-50 (STRT), Gln-74, Arg-98, and 125-128 (HPCQ). Residues Asn-156, Asp-220, and 224–225 (SM) each bind L-ornithine. Residues 260-261 (CL) and Arg-288 each bind carbamoyl phosphate.

This sequence belongs to the aspartate/ornithine carbamoyltransferase superfamily. OTCase family.

The protein resides in the cytoplasm. It catalyses the reaction carbamoyl phosphate + L-ornithine = L-citrulline + phosphate + H(+). It participates in amino-acid biosynthesis; L-arginine biosynthesis; L-arginine from L-ornithine and carbamoyl phosphate: step 1/3. Reversibly catalyzes the transfer of the carbamoyl group from carbamoyl phosphate (CP) to the N(epsilon) atom of ornithine (ORN) to produce L-citrulline. This Methanosphaera stadtmanae (strain ATCC 43021 / DSM 3091 / JCM 11832 / MCB-3) protein is Ornithine carbamoyltransferase.